The sequence spans 660 residues: Bifunctional polymyxin resistance protein ArnA (660 aa).

Positions Met1–Leu304 are formyltransferase ArnAFT. Residue His86 to Ile88 participates in (6R)-10-formyltetrahydrofolate binding. His104 acts as the Proton donor; for formyltransferase activity in catalysis. (6R)-10-formyltetrahydrofolate contacts are provided by residues Arg114 and Val136 to Asp140. Positions Arg314–Leu660 are dehydrogenase ArnADH. Residues Asp347 and Asp368–Ile369 each bind NAD(+). UDP-alpha-D-glucuronate-binding positions include Ala393, Tyr398, and Thr432–Ser433. Glu434 acts as the Proton acceptor; for decarboxylase activity in catalysis. Residues Arg460, Asn492, Lys526–Arg535, and Tyr613 contribute to the UDP-alpha-D-glucuronate site. Catalysis depends on Arg619, which acts as the Proton donor; for decarboxylase activity.

In the N-terminal section; belongs to the Fmt family. UDP-L-Ara4N formyltransferase subfamily. This sequence in the C-terminal section; belongs to the NAD(P)-dependent epimerase/dehydratase family. UDP-glucuronic acid decarboxylase subfamily. Homohexamer, formed by a dimer of trimers.

The catalysed reaction is UDP-alpha-D-glucuronate + NAD(+) = UDP-beta-L-threo-pentopyranos-4-ulose + CO2 + NADH. It catalyses the reaction UDP-4-amino-4-deoxy-beta-L-arabinose + (6R)-10-formyltetrahydrofolate = UDP-4-deoxy-4-formamido-beta-L-arabinose + (6S)-5,6,7,8-tetrahydrofolate + H(+). The protein operates within nucleotide-sugar biosynthesis; UDP-4-deoxy-4-formamido-beta-L-arabinose biosynthesis; UDP-4-deoxy-4-formamido-beta-L-arabinose from UDP-alpha-D-glucuronate: step 1/3. It participates in nucleotide-sugar biosynthesis; UDP-4-deoxy-4-formamido-beta-L-arabinose biosynthesis; UDP-4-deoxy-4-formamido-beta-L-arabinose from UDP-alpha-D-glucuronate: step 3/3. Its pathway is bacterial outer membrane biogenesis; lipopolysaccharide biosynthesis. Bifunctional enzyme that catalyzes the oxidative decarboxylation of UDP-glucuronic acid (UDP-GlcUA) to UDP-4-keto-arabinose (UDP-Ara4O) and the addition of a formyl group to UDP-4-amino-4-deoxy-L-arabinose (UDP-L-Ara4N) to form UDP-L-4-formamido-arabinose (UDP-L-Ara4FN). The modified arabinose is attached to lipid A and is required for resistance to polymyxin and cationic antimicrobial peptides. This chain is Bifunctional polymyxin resistance protein ArnA, found in Escherichia coli O6:K15:H31 (strain 536 / UPEC).